An 804-amino-acid polypeptide reads, in one-letter code: MNYNHKEIEKKWQNYWEENKTFKTNDNLGQKKFYALDMFPYPSGAGLHVGHPEGYTATDIISRYKRMQGYNVLHPMGWDAFGLPAEQYALDTGNDPREFTQKNIQTFKRQIQELGFSYDWDREVNTTDPEYYKWTQWIFIQLYNKGLAYVDEVAVNWCPALGTVLSNEEVVDGVSERGGHPVYRKPMKQWVLKITEYADRLLEDLDELDWPESIKDMQRNWIGRSEGAKVTFKIEQSDQNIEVFTTRPDTIYGTSFLVLSPEHPLVNEITTSDKEQEVKLYQNEASKKSDLERTDLAKEKTGVFTGTFAINPLSGDKLPIWIADYVLSTYGTGAVMAVPGHDERDHEFATKFNLPIIEVIEGGEVQKYAYTGEGKHINSGELDGLENEAAISKAIELLESKGAGEKKVNYKLRDWLFSRQRYWGEPIPIIHWEDGSMTTVPEDELPLLLPETDEIKPSGTGESPLANIDAFVNVIDEKTGMKGRRETNTMPQWAGSCWYYLRYIDPHNEKMIADPEKLKHWLPVDLYIGGVEHAVLHLLYARFWHKVLYDLGVVPTKEPFQKLYNQGMILGEGNEKMSKSKGNVINPDDIVASHGADTLRLYEMFMGPLDAAIAWSEKGLDGSRRFLDRVWRLIITDENSINKKIVDSNNHSLDKVYNQTVKKVTEDFDTLSFNTAISQLMVFINECYKTNEVYKPYIEGFVKMLSPIAPHIGEELWDRLGHENTITYQPWPTFDESLLVDDEVEIVVQVNGKVRAKINIPKDLSKEEMQDLALSNDNVKMSIEGKEVKKVIAVPQKLVNIVAK.

The 'HIGH' region motif lies at Pro-40–His-51. Residues Lys-576–Ser-580 carry the 'KMSKS' region motif. Residue Lys-579 participates in ATP binding.

This sequence belongs to the class-I aminoacyl-tRNA synthetase family.

The protein localises to the cytoplasm. It catalyses the reaction tRNA(Leu) + L-leucine + ATP = L-leucyl-tRNA(Leu) + AMP + diphosphate. This chain is Leucine--tRNA ligase, found in Staphylococcus epidermidis (strain ATCC 35984 / DSM 28319 / BCRC 17069 / CCUG 31568 / BM 3577 / RP62A).